A 212-amino-acid chain; its full sequence is RNA chaperone ProQ (212 aa).

Positions 107–153 (QDKAKAKRVAQAKSANPAAKTAKKPVKKPVAKRPKQTQSSKPAKEPV) are disordered. Residues 117 to 126 (QAKSANPAAK) are compositionally biased toward low complexity. The span at 127–141 (TAKKPVKKPVAKRPK) shows a compositional bias: basic residues.

Belongs to the ProQ family.

The protein localises to the cytoplasm. RNA chaperone with significant RNA binding, RNA strand exchange and RNA duplexing activities. The polypeptide is RNA chaperone ProQ (Shewanella halifaxensis (strain HAW-EB4)).